Here is a 161-residue protein sequence, read N- to C-terminus: Epididymal protein 13 (161 aa).

An N-terminal signal peptide occupies residues 1-23 (MHRSEPFLKMSLLILLFLGLAEA). The N-linked (GlcNAc...) asparagine glycan is linked to N56.

The protein resides in the secreted. In Homo sapiens (Human), this protein is Epididymal protein 13.